Reading from the N-terminus, the 174-residue chain is MASFFLYSLGLVFLSALTLVPLGLADKSPSHNMPPNPIYTTPIHKNPTNTPVYNPPIYKPPPTYKPPIKKQPINKSPNKKPLLLKPPLPKPPHKEPPSRKRPINTPPDKKPPLLKPPFPKPPQKKPPSRKRPINTPPNKKPPLPKPPVNKPPHKKPSNKRPPPYGNQPPPSIHF.

The N-terminal stretch at 1–25 (MASFFLYSLGLVFLSALTLVPLGLA) is a signal peptide. The disordered stretch occupies residues 28-174 (SPSHNMPPNP…GNQPPPSIHF (147 aa)). Residues 53–65 (YNPPIYKPPPTYK) are compositionally biased toward pro residues. A compositionally biased stretch (low complexity) spans 70–83 (KQPINKSPNKKPLL). Over residues 122–132 (PQKKPPSRKRP) the composition is skewed to basic residues. Composition is skewed to pro residues over residues 134–150 (NTPPNKKPPLPKPPVNK) and 159–174 (KRPPPYGNQPPPSIHF).

It belongs to the plant proline-rich protein superfamily. Expressed in cotyledons, leaf vasculature, stomatal guard cells and trichomes. In the embryo, expressed in embryo suspensors, the epidermis and underlying tissues of the cotyledons, hypocotyls, and radicle in maturing embryos, and the outer cell layer of the endosperm.

The protein localises to the secreted. It localises to the cell wall. Involved in the infection process during the plant-rhizobium interaction. Involved in actinorhizal root nodulation. Involved in symbiotic association with the nitrogen-fixing actinomycete Frankia spp. This Medicago truncatula (Barrel medic) protein is Early nodulin-11.